A 305-amino-acid polypeptide reads, in one-letter code: Methionyl-tRNA formyltransferase (305 aa).

S108–P111 is a (6S)-5,6,7,8-tetrahydrofolate binding site.

Belongs to the Fmt family.

It carries out the reaction L-methionyl-tRNA(fMet) + (6R)-10-formyltetrahydrofolate = N-formyl-L-methionyl-tRNA(fMet) + (6S)-5,6,7,8-tetrahydrofolate + H(+). Its function is as follows. Attaches a formyl group to the free amino group of methionyl-tRNA(fMet). The formyl group appears to play a dual role in the initiator identity of N-formylmethionyl-tRNA by promoting its recognition by IF2 and preventing the misappropriation of this tRNA by the elongation apparatus. The protein is Methionyl-tRNA formyltransferase of Thermus thermophilus (strain ATCC 27634 / DSM 579 / HB8).